The sequence spans 48 residues: Large ribosomal subunit protein eL40 (48 aa).

The protein belongs to the eukaryotic ribosomal protein eL40 family.

The chain is Large ribosomal subunit protein eL40 from Methanosphaerula palustris (strain ATCC BAA-1556 / DSM 19958 / E1-9c).